A 264-amino-acid polypeptide reads, in one-letter code: MAVGKNKRLTKGGKKGAKKKVVDPFSKKDWYDVKAPAMFNIRNIGKTLVTRTQGTKIASDGLKGRVFEVSLADFQNDEVAFRKFKLITEDVQGKNCLTNFHGMDLTRDKMCSMVKKWQTMIEAHVDVKTTDGYLLRLFCVGFTKKHNNQIRKTSYAQHQQVCQIRKKMMEIMTREVQTNDLKEVVNKLIPDSIGKDIEKACQSIYPLHDVFVRKVKMLKIPKFELGKLMELHGEGSSSGKATGDETGAKVERADGYEPPVQESV.

Position 34 is an N6-acetyllysine; alternate (Lys34). Lys34 is covalently cross-linked (Glycyl lysine isopeptide (Lys-Gly) (interchain with G-Cter in SUMO2); alternate). Lys56 bears the N6-acetyllysine mark. Position 155 is an ADP-ribosyltyrosine (Tyr155). The disordered stretch occupies residues Gly233–Val264. 2 positions are modified to phosphoserine: Ser236 and Ser237. Over residues Thr242 to Gly255 the composition is skewed to basic and acidic residues. Lys249 carries the post-translational modification N6-acetyllysine; alternate. Residue Lys249 forms a Glycyl lysine isopeptide (Lys-Gly) (interchain with G-Cter in SUMO2); alternate linkage. At Tyr256 the chain carries Phosphotyrosine. The residue at position 263 (Ser263) is a Phosphoserine.

This sequence belongs to the eukaryotic ribosomal protein eS1 family. As to quaternary structure, component of the small ribosomal subunit. Mature ribosomes consist of a small (40S) and a large (60S) subunit. The 40S subunit contains about 33 different proteins and 1 molecule of RNA (18S). The 60S subunit contains about 49 different proteins and 3 molecules of RNA (28S, 5.8S and 5S). Part of the small subunit (SSU) processome, composed of more than 70 proteins and the RNA chaperone small nucleolar RNA (snoRNA) U3. ADP-ribosylated at Tyr-155 by PARP1 in presence of HPF1.

It is found in the cytoplasm. The protein resides in the nucleus. Its subcellular location is the nucleolus. Its function is as follows. Component of the small ribosomal subunit. The ribosome is a large ribonucleoprotein complex responsible for the synthesis of proteins in the cell. Part of the small subunit (SSU) processome, first precursor of the small eukaryotic ribosomal subunit. During the assembly of the SSU processome in the nucleolus, many ribosome biogenesis factors, an RNA chaperone and ribosomal proteins associate with the nascent pre-rRNA and work in concert to generate RNA folding, modifications, rearrangements and cleavage as well as targeted degradation of pre-ribosomal RNA by the RNA exosome. May play a role during erythropoiesis. The polypeptide is Small ribosomal subunit protein eS1 (Callithrix jacchus (White-tufted-ear marmoset)).